A 118-amino-acid chain; its full sequence is Fluoride-specific ion channel FluC 2 (118 aa).

4 consecutive transmembrane segments (helical) span residues 1 to 21 (MMEALLVATGGFFGAITRFAI), 33 to 53 (FPIATFLINITGAFLLGYIIG), 55 to 75 (GVTTGWQLLLGTGFMGAFTTF), and 93 to 113 (ILFLYLSATYIIGILFAFLGM). Na(+)-binding residues include Gly-70 and Thr-73.

The protein belongs to the fluoride channel Fluc/FEX (TC 1.A.43) family.

The protein resides in the cell membrane. The enzyme catalyses fluoride(in) = fluoride(out). Na(+) is not transported, but it plays an essential structural role and its presence is essential for fluoride channel function. In terms of biological role, fluoride-specific ion channel. Important for reducing fluoride concentration in the cell, thus reducing its toxicity. In Bacillus cereus (strain ATCC 10987 / NRS 248), this protein is Fluoride-specific ion channel FluC 2.